Here is a 335-residue protein sequence, read N- to C-terminus: Biotin synthase (335 aa).

The Radical SAM core domain maps to 43 to 269; it reads YFGKKVKLNM…INPTKEIRIA (227 aa). 3 residues coordinate [4Fe-4S] cluster: Cys61, Cys65, and Cys68. 4 residues coordinate [2Fe-2S] cluster: Cys104, Cys137, Cys197, and Arg267.

This sequence belongs to the radical SAM superfamily. Biotin synthase family. Homodimer. [4Fe-4S] cluster serves as cofactor. Requires [2Fe-2S] cluster as cofactor.

The catalysed reaction is (4R,5S)-dethiobiotin + (sulfur carrier)-SH + 2 reduced [2Fe-2S]-[ferredoxin] + 2 S-adenosyl-L-methionine = (sulfur carrier)-H + biotin + 2 5'-deoxyadenosine + 2 L-methionine + 2 oxidized [2Fe-2S]-[ferredoxin]. The protein operates within cofactor biosynthesis; biotin biosynthesis; biotin from 7,8-diaminononanoate: step 2/2. Its function is as follows. Catalyzes the conversion of dethiobiotin (DTB) to biotin by the insertion of a sulfur atom into dethiobiotin via a radical-based mechanism. This is Biotin synthase from Staphylococcus aureus (strain MRSA252).